A 91-amino-acid chain; its full sequence is Small ribosomal subunit protein uS17 (91 aa).

Belongs to the universal ribosomal protein uS17 family. As to quaternary structure, part of the 30S ribosomal subunit.

Functionally, one of the primary rRNA binding proteins, it binds specifically to the 5'-end of 16S ribosomal RNA. The sequence is that of Small ribosomal subunit protein uS17 from Malacoplasma penetrans (strain HF-2) (Mycoplasma penetrans).